The sequence spans 356 residues: Histidinol-phosphate aminotransferase (356 aa).

Lys214 is modified (N6-(pyridoxal phosphate)lysine).

This sequence belongs to the class-II pyridoxal-phosphate-dependent aminotransferase family. Histidinol-phosphate aminotransferase subfamily. Homodimer. It depends on pyridoxal 5'-phosphate as a cofactor.

It catalyses the reaction L-histidinol phosphate + 2-oxoglutarate = 3-(imidazol-4-yl)-2-oxopropyl phosphate + L-glutamate. It functions in the pathway amino-acid biosynthesis; L-histidine biosynthesis; L-histidine from 5-phospho-alpha-D-ribose 1-diphosphate: step 7/9. The sequence is that of Histidinol-phosphate aminotransferase from Shigella dysenteriae serotype 1 (strain Sd197).